Reading from the N-terminus, the 128-residue chain is MQRHMLKSKIHRAAVTHCELHYEGSCAIDEDLLEASGIIENERIDIWNINNGERFSTYAIKGERGSGMISLNGSAARRAQLGDLVIIAAFAMVDEAELQAGWKPKLVFMDDGNKIKGHRDHVPTQNWT.

S25 serves as the catalytic Schiff-base intermediate with substrate; via pyruvic acid. Position 25 is a pyruvic acid (Ser) (S25). T57 serves as a coordination point for substrate. Y58 (proton donor) is an active-site residue. Position 73 to 75 (73 to 75 (GSA)) interacts with substrate.

It belongs to the PanD family. In terms of assembly, heterooctamer of four alpha and four beta subunits. Pyruvate serves as cofactor. In terms of processing, is synthesized initially as an inactive proenzyme, which is activated by self-cleavage at a specific serine bond to produce a beta-subunit with a hydroxyl group at its C-terminus and an alpha-subunit with a pyruvoyl group at its N-terminus.

It is found in the cytoplasm. The enzyme catalyses L-aspartate + H(+) = beta-alanine + CO2. It functions in the pathway cofactor biosynthesis; (R)-pantothenate biosynthesis; beta-alanine from L-aspartate: step 1/1. Its function is as follows. Catalyzes the pyruvoyl-dependent decarboxylation of aspartate to produce beta-alanine. The polypeptide is Aspartate 1-decarboxylase (Burkholderia lata (strain ATCC 17760 / DSM 23089 / LMG 22485 / NCIMB 9086 / R18194 / 383)).